Reading from the N-terminus, the 440-residue chain is Probable exopolygalacturonase C (440 aa).

The signal sequence occupies residues 1–21 (MLITNPALLGILASLAPLALG). Asn-24, Asn-84, Asn-151, and Asn-219 each carry an N-linked (GlcNAc...) asparagine glycan. PbH1 repeat units follow at residues 217–238 (GTNI…AVNT) and 240–261 (SHNI…SIGS). The active-site Proton donor is the Asp-231. The active site involves His-255. N-linked (GlcNAc...) asparagine glycosylation occurs at Asn-271. The stretch at 272–293 (ITNLRFEDVTVIDALYAARFKS) is one PbH1 3 repeat. N-linked (GlcNAc...) asparagine glycosylation is found at Asn-313 and Asn-350. The cysteines at positions 389 and 395 are disulfide-linked. The N-linked (GlcNAc...) asparagine glycan is linked to Asn-434.

This sequence belongs to the glycosyl hydrolase 28 family.

The protein localises to the secreted. The enzyme catalyses [(1-&gt;4)-alpha-D-galacturonosyl](n) + H2O = alpha-D-galacturonate + [(1-&gt;4)-alpha-D-galacturonosyl](n-1). Specific in hydrolyzing the terminal glycosidic bond of polygalacturonic acid and oligogalacturonates. The protein is Probable exopolygalacturonase C (pgxC) of Neosartorya fischeri (strain ATCC 1020 / DSM 3700 / CBS 544.65 / FGSC A1164 / JCM 1740 / NRRL 181 / WB 181) (Aspergillus fischerianus).